Reading from the N-terminus, the 428-residue chain is ETS domain-containing protein Elk-1 (428 aa).

Residues 5–86 (VTLWQFLLQL…SGQKFVYKFV (82 aa)) constitute a DNA-binding region (ETS). Disordered regions lie at residues 121-149 (AAPG…ARSS), 165-205 (QSLQ…SPLE), and 228-358 (NLKS…SLLP). Low complexity predominate over residues 177–205 (PAVVLPSAAPAGAAAPPSGSRSTSPSPLE). Residues lysine 230, lysine 249, and lysine 254 each participate in a glycyl lysine isopeptide (Lys-Gly) (interchain with G-Cter in SUMO) cross-link. Residues 248–261 (VKVEGPKEELEVAG) show a composition bias toward basic and acidic residues. Serine 324 carries the post-translational modification Phosphoserine; by MAPK1. Residues threonine 336, threonine 353, threonine 363, and threonine 368 each carry the phosphothreonine; by MAPK1 modification. Residues 349–399 (GPALTPSLLPTHTLTPVLLTPSSLPPSIHFWSTLSPIAPRSPAKLSFQFPS) form a sufficient for interaction with MAD2L2 region. Threonine 381 carries O-linked (GlcNAc) threonine glycosylation. The residue at position 383 (serine 383) is a Phosphoserine; by MAPK1 and MAPK8. At serine 389 the chain carries Phosphoserine; by MAPK1. Threonine 417 carries the phosphothreonine; by MAPK1 modification. A Phosphoserine; by MAPK1 modification is found at serine 422.

Belongs to the ETS family. Interacts in its sumoylated form with PIAS2/PIASX which enhances its transcriptional activator activity. Interacts with MAD2L2; the interaction is direct and promotes phosphorylation by the kinases MAPK8 and/or MAPK9. Interacts with POU1F1. Post-translationally, sumoylation represses transcriptional activator activity as it results in recruitment of HDAC2 to target gene promoters which leads to decreased histone acetylation and reduced transactivator activity. It also regulates nuclear retention. In terms of processing, on mitogenic stimulation, phosphorylated on C-terminal serine and threonine residues by MAPK1. Ser-383 and Ser-389 are the preferred sites for MAPK1. In vitro, phosphorylation by MAPK1 potentiates ternary complex formation with the serum responses factors, SRE and SRF. Also phosphorylated on Ser-383 by MAPK8 and/or MAKP9. Phosphorylation leads to loss of sumoylation and restores transcriptional activator activity. Phosphorylated and activated by CAMK4, MAPK11, MAPK12 and MAPK14. Upon bFGF stimulus, phosphorylated by PAK1. Phosphorylated by PRP4K at Thr-417; phosphorylation activation ELK1 transcriptional activity. In terms of tissue distribution, lung and testis.

It localises to the nucleus. Transcription factor that binds to purine-rich DNA sequences. Forms a ternary complex with SRF and the ETS and SRF motifs of the serum response element (SRE) on the promoter region of immediate early genes such as FOS and IER2. Induces target gene transcription upon JNK and MAPK-signaling pathways stimulation. This Homo sapiens (Human) protein is ETS domain-containing protein Elk-1.